The following is a 92-amino-acid chain: Ezrin (92 aa).

The FERM domain occupies 1–72 (QLFDQVVKGF…PDFVFYAPRR (72 aa)). Lys-15 bears the N6-acetyllysine mark. The segment at 42 to 92 (EIRNISFNDKKFVIKPIDKKAPDFVFYAPRRKPDTIEVQQMKLQDFEQKTK) is interaction with SCYL3.

As to quaternary structure, interacts with PALS1 and NHERF2. Found in a complex with EZR, PODXL and NHERF2. Interacts with MCC, PLEKHG6, PODXL, SCYL3/PACE1, NHERF1 and TMEM8B. Interacts (when phosphorylated) with FES/FPS. Interacts with dimeric S100P, the interaction may be activating through unmasking of F-actin binding sites. Identified in complexes that contain VIM, EZR, AHNAK, BFSP1, BFSP2, ANK2, PLEC, PRX and spectrin. Detected in a complex composed of at least EZR, AHNAK, PPL and PRX. Interacts with PDPN (via cytoplasmic domain); activates RHOA and promotes epithelial-mesenchymal transition. Interacts with SPN/CD43 cytoplasmic tail, CD44 and ICAM2. Interacts with CLIC5; may work together in a complex which also includes RDX and MYO6 to stabilize linkages between the plasma membrane and subjacent actin cytoskeleton at the base of stereocilia. Phosphorylated by tyrosine-protein kinases. Phosphorylation by ROCK2 suppresses the head-to-tail association of the N-terminal and C-terminal halves resulting in an opened conformation which is capable of actin and membrane-binding. Post-translationally, S-nitrosylation is induced by interferon-gamma and oxidatively-modified low-densitity lipoprotein (LDL(ox)) possibly implicating the iNOS-S100A8/9 transnitrosylase complex.

It is found in the apical cell membrane. Its subcellular location is the cell projection. It localises to the microvillus membrane. The protein resides in the ruffle membrane. The protein localises to the cytoplasm. It is found in the cell cortex. Its subcellular location is the cytoskeleton. It localises to the microvillus. Its activity is regulated as follows. A head-to-tail association, of the N-terminal and C-terminal halves results in a closed conformation (inactive form) which is incapable of actin or membrane-binding. Probably involved in connections of major cytoskeletal structures to the plasma membrane. In epithelial cells, required for the formation of microvilli and membrane ruffles on the apical pole. Along with PLEKHG6, required for normal macropinocytosis. In Mesocricetus auratus (Golden hamster), this protein is Ezrin.